Consider the following 2314-residue polypeptide: MLTMSVTLSPLRSQGPDPMATDASPMAINMTPTVEQEEGEGEEAVKAIDAEQQYGKPPPLHTAADWKIVLHLPEIETWLRMTSERVRDLTYSVQQDADSKHVDVHLVQLKDICEDISDHVEQIHALLETEFSLKLLSYSVNVIVDIHAVQLLWHQLRVSVLVLRERILQGLQDANGNYTRQTDILQAFSEETTEGRLDSLTEVDDSGQLTIKCSQDYLSLDCGITAFELSDYSPSEDLLGGLGDMTTSQAKTKSFDSWSYSEMEKEFPELIRSVGLLTVATEPVPSSCGEANEDSSQASLSDDHKGEHGEDGAPVPGQQLDSTVGMSSLDGTLANAAEHPSETAKQDSTSSPQLGAKKTQPGPCEITTPKRSIRDCFNYNEDSPTQPTLPKRGLFLKETQKNERKGSDRKGQVVDLKPELSRSTPSLVDPPDRSKLCLVLQSSYPSSPSAASQSYECLHKVGLGNLENIVRSHIKEISSSLGRLTDCHKEKLRLKKPHKTLAEVSLCRIPKQGGGSGKRSESTGSSAGPSMVSPGAPKATMRPETDSASTASGGLCHQRNRSGQLPVQSKASSSPPCSHSSESSLGSDSIKSPVPLLSKNKSQKSSPPAPCHATQNGQVVEAWYGSDEYLALPSHLKQTEVLALKLESLTKLLPQKPRGETIQDIDDWELSEMNSDSEIYPTYHIKKKHTRLGTVSPSSSSDIASSLGESIESGPLSDILSDEDLCLPLSSVKKFTDEKSERPSSSEKNESHSATRSALIQKLMHDIQHQENYEAIWERIEGFVNKLDEFIQWLNEAMETTENWTPPKAETDSLRLYLETHLSFKLNVDSHCALKEAVEEEGHQLLELVVSHKAGLKDTLRMIASQWKELQRQIKRQHSWILRALDTIKAEILATDVSVEDEEGTGSPKAEVQLCHLETQRDAVEQMSLKLYSEQYTSGSKRKEEFANMSKAHAEGSNGLLDFDSEYQELWDWLIDMESLVMDSHDLMMSEEQQQHLYKRYSVEMSIRHLKKSELLSKVEALKKGGLSLPDDILEKVDSINEKWELLGKTLREKIQDTIAGHSGSGPRDLLSPESGSLVRQLEVRIKELKRWLRDTELFIFNSCLRQEKEGTSAEKQLQYFKSLCREIKQRRRGVASILRLCQHLLDDRDTCNLNADHQPMQLIIVNLERRWEAIVMQAVQWQTRLQKKMGKESETLNVIDPGLMDLNGMSEDALEWDETDISNKLISVHEESNDLDQDPEPMLPAVKLEETHHKDSGYEEEAGDCGGSPYTSNITAPSSPHIYQVYSLHNVELHEDSHTPFLKSSPKFTGTTQPTVLTKSLSKDSSFSSTKSLPDLLGGSGLVRPYSCHSGDLSQNSGSESGIVSEGDNEMPTNSDMSLFSMVDGSPSNPETEHPDPQMGDAANVLEQKFKDNGESIKLSSVSRASVSPVGCVNGKAGDLNSVTKHTADCLGEELQGKHDVFTFYDYSYLQGSKLKLPMIMKQPQSEKAHVEDPLLGGFYFDKKSCKAKHQASESQPDAPPHERILASAPHEMGRSAYKSSDIEKTFTGIQSARQLSLLSRSSSVESLSPGGDLFGLGIFKNGSDSLQRSTSLESWLTSYKSNEDLFSCHSSGDISVSSGSVGELSKRTLDLLNRLENIQSPSEQKIKRSVSDMTLQSSSQKMPFAGQMSLDVASSINEDSPASLTELSSSDELSLCSEDIVLHKNKIPESNASFRKRLNRSVADESDVNVSMIVNVSCTSACTDDEDDSDLLSSSTLTLTEEELCLKDEDDDSSIATDDEIYEESNLMSGLDYIKNELQTWIRPKLSLTREKKRSGVTDEIKVNKDGGGNEKANPSDTLDIEALLNGSIRCLSENNGNGKTPPRTHGSGTKGENKKSTYDVSKDPHVADMENGNIESTPEREREKPQGLPEVSENLASNVKTISESELSEYEAVMDGSEDSSVARKEFCPPNDRHPPQMGPKLQHPENQSGDCKPVQNPCPGLLSEAGVGSRQDSNGLKSLPNDAPSGARKPAGCCLLEQNETEESASISSNASCCNCKPDVFHQKDDEDCSVHDFVKEIIDMASTALKSKSQPESEVAAPTSLTQIKEKVLEHSHRPIHLRKGDFYSYLSLSSHDSDCGEVTNYIDEKSSTPLPPDAVDSGLDDKEDMDCFFEACVEDEPVNEEAGLPGALPNESAIEDGAEQKSEQKTASSPVLSDKTDLVPLSGLSPQKGADDAKEGDDVSHTSQGCAESTEPTTPSGKANAEGRSRMQGVSATPEENAASAKPKIQAFSLNAKQPKGKVAMRYPSPQTLTCKEKLVNFHEDRHSNMHR.

The span at 1–12 shows a compositional bias: polar residues; sequence MLTMSVTLSPLR. Disordered regions lie at residues 1-25, 285-432, 505-613, and 736-755; these read MLTMSVTLSPLRSQGPDPMATDASP, PSSC…DPPD, SLCR…PCHA, and TDEKSERPSSSEKNESHSAT. The segment covering 301–311 has biased composition (basic and acidic residues); it reads SDDHKGEHGED. Positions 319 to 330 are enriched in polar residues; that stretch reads QLDSTVGMSSLD. Over residues 398–420 the composition is skewed to basic and acidic residues; that stretch reads ETQKNERKGSDRKGQVVDLKPEL. Residues 569 to 592 show a composition bias toward low complexity; the sequence is SKASSSPPCSHSSESSLGSDSIKS. Over residues 736-753 the composition is skewed to basic and acidic residues; sequence TDEKSERPSSSEKNESHS. Spectrin repeat units lie at residues 768–847 and 1033–1148; these read QHQE…QLLE and ILEK…LLDD. Ser-1072 bears the Phosphoserine mark. The tract at residues 1349 to 1401 is disordered; that stretch reads CHSGDLSQNSGSESGIVSEGDNEMPTNSDMSLFSMVDGSPSNPETEHPDPQMG. Polar residues predominate over residues 1353 to 1363; it reads DLSQNSGSESG. Phosphoserine is present on residues Ser-1568 and Ser-1593. Basic and acidic residues-rich tracts occupy residues 1816 to 1831 and 1874 to 1891; these read RSGVTDEIKVNKDGGG and GENKKSTYDVSKDPHVAD. Disordered regions lie at residues 1816 to 1838, 1854 to 1926, and 1940 to 2012; these read RSGVTDEIKVNKDGGGNEKANPS, LSEN…KTIS, and SEDS…SGAR. A compositionally biased stretch (polar residues) spans 1917 to 1926; sequence NLASNVKTIS. Over residues 1944–1958 the composition is skewed to basic and acidic residues; sequence SVARKEFCPPNDRHP. Residues 2062-2075 are PKA-RII subunit binding domain; it reads IIDMASTALKSKSQ. The segment at 2166–2286 is disordered; the sequence is EEAGLPGALP…NAKQPKGKVA (121 aa). A compositionally biased stretch (basic and acidic residues) spans 2215-2226; that stretch reads GADDAKEGDDVS. Over residues 2227–2243 the composition is skewed to polar residues; the sequence is HTSQGCAESTEPTTPSG.

Interacts with RII subunit of PKA, phosphatase 2B (calcineurin) and AKAP79. Interacts with SYNPO2.

The protein localises to the sarcoplasmic reticulum. The protein resides in the nucleus membrane. Functionally, binds to type II regulatory subunits of protein kinase A and anchors/targets them to the nuclear membrane or sarcoplasmic reticulum. May act as an adapter for assembling multiprotein complexes. In Rattus norvegicus (Rat), this protein is A-kinase anchor protein 6 (Akap6).